The chain runs to 237 residues: LexA repressor (237 aa).

The H-T-H motif DNA-binding region spans 26–46 (FDEMKDALDLRSKSGIHRLIT). Catalysis depends on for autocatalytic cleavage activity residues S158 and K196.

It belongs to the peptidase S24 family. Homodimer.

It carries out the reaction Hydrolysis of Ala-|-Gly bond in repressor LexA.. Represses a number of genes involved in the response to DNA damage (SOS response), including recA and lexA. In the presence of single-stranded DNA, RecA interacts with LexA causing an autocatalytic cleavage which disrupts the DNA-binding part of LexA, leading to derepression of the SOS regulon and eventually DNA repair. This is LexA repressor from Rhodopseudomonas palustris (strain BisA53).